Here is a 182-residue protein sequence, read N- to C-terminus: Ribosome-recycling factor (182 aa).

The protein belongs to the RRF family.

The protein resides in the cytoplasm. Its function is as follows. Responsible for the release of ribosomes from messenger RNA at the termination of protein biosynthesis. May increase the efficiency of translation by recycling ribosomes from one round of translation to another. The sequence is that of Ribosome-recycling factor from Parasynechococcus marenigrum (strain WH8102).